The following is a 1404-amino-acid chain: DNA-directed RNA polymerase subunit beta' (1404 aa).

Zn(2+) contacts are provided by cysteine 70, cysteine 72, cysteine 85, and cysteine 88. Aspartate 460, aspartate 462, and aspartate 464 together coordinate Mg(2+). Cysteine 814, cysteine 889, cysteine 896, and cysteine 899 together coordinate Zn(2+). Residues 1377–1404 are disordered; it reads DSEMETLSGKPAAAEPVAAVADAGADEE. Residues 1387 to 1404 show a composition bias toward low complexity; sequence PAAAEPVAAVADAGADEE.

It belongs to the RNA polymerase beta' chain family. The RNAP catalytic core consists of 2 alpha, 1 beta, 1 beta' and 1 omega subunit. When a sigma factor is associated with the core the holoenzyme is formed, which can initiate transcription. Mg(2+) serves as cofactor. Zn(2+) is required as a cofactor.

It carries out the reaction RNA(n) + a ribonucleoside 5'-triphosphate = RNA(n+1) + diphosphate. DNA-dependent RNA polymerase catalyzes the transcription of DNA into RNA using the four ribonucleoside triphosphates as substrates. The sequence is that of DNA-directed RNA polymerase subunit beta' from Xanthomonas euvesicatoria pv. vesicatoria (strain 85-10) (Xanthomonas campestris pv. vesicatoria).